Consider the following 141-residue polypeptide: Large ribosomal subunit protein uL16 (141 aa).

The protein belongs to the universal ribosomal protein uL16 family. As to quaternary structure, part of the 50S ribosomal subunit.

Its function is as follows. Binds 23S rRNA and is also seen to make contacts with the A and possibly P site tRNAs. The polypeptide is Large ribosomal subunit protein uL16 (Geobacillus thermodenitrificans (strain NG80-2)).